The chain runs to 684 residues: MENQIHSLLHFPSSASTGSTSNSHNNHHNNNNNNNYNNNNNNNINNINNNHHHHHNYKSIQQHSPHSSTPNISTENVDIYSSHEANSSNGYNNGNNFSYSMNGNFNYNFSPMNSPHHSHNHPDTSNNNMLPLNDSGIHFNQHQHPSSASSSSSSSSSSLSSSSHHHHSNHHHHHPNLHINLPPIPQYPSLNDSSSNGNGTPALSSPSSTTPHPTTPHPTTPTSTPNQRFQSNGSSSFQNQLQNHLENKLSSFWSSQLRDIHKTEDFKTHELPLARIKKIMKSDKDVNKISSEAPILFAKACEILILEMTHRSWVHTEMNKRRTLQRTDIINSLSRCETFDFLIDMLPRDEIKPSRKYLDELSKAQVITPEYLQYLQLQQMATENQQKNNQNNQNNQNKNNQQILPQQRNLNIPHSPQLQEQSSNNNNNNNNNNNNNNSVSVKRSYSMEIQNSSPLSTPKKRSNSQDYNFQYNENNHNQSSLSQTQQLQQLNQQQQQQQQQQQQQQQQQQQQQQQHSQQISQQIHHIPTPSNSSSSLPPLPPHNSNHAHNNNNNNNNNNNNNNNNNLNNNNNNNNNNNNNNNNNNNNNNNNNNNNNNNNNNNNNNNNNNNNNNNNNNNNNNNNNNNNNNNNNNNNNNNTFDYSFNDSKNDEHKVSLNESNFISTPTNDNIISSSPSSQVYYYSDN.

Disordered stretches follow at residues 1 to 74, 112 to 238, 414 to 487, and 511 to 650; these read MENQ…NIST, MNSP…SSFQ, HSPQ…TQQL, and QQQQ…KNDE. Low complexity predominate over residues 21 to 49; sequence SNSHNNHHNNNNNNNYNNNNNNNINNINN. Polar residues predominate over residues 58 to 74; that stretch reads KSIQQHSPHSSTPNIST. The span at 142–162 shows a compositional bias: low complexity; the sequence is HQHPSSASSSSSSSSSSLSSS. A compositionally biased stretch (basic residues) spans 163-176; sequence SHHHHSNHHHHHPN. A compositionally biased stretch (polar residues) spans 188 to 203; sequence PSLNDSSSNGNGTPAL. Positions 220–238 are enriched in low complexity; it reads TPTSTPNQRFQSNGSSSFQ. Residues 414-423 show a composition bias toward polar residues; sequence HSPQLQEQSS. Positions 424–437 are enriched in low complexity; it reads NNNNNNNNNNNNNN. 2 stretches are compositionally biased toward polar residues: residues 438–456 and 464–477; these read SVSV…SPLS and SQDY…NNHN. Low complexity-rich tracts occupy residues 478-487, 511-522, and 529-637; these read QSSLSQTQQL, QQQQHSQQISQQ, and PSNS…NNNN.

Belongs to the NFYC/HAP5 subunit family. In terms of assembly, heterotrimeric transcription factor composed of three components, NF-YA, NF-YB and NF-YC. NF-YB and NF-YC must interact and dimerize for NF-YA association and DNA binding.

It localises to the nucleus. Stimulates the transcription of various genes by recognizing and binding to a CCAAT motif in promoters. The chain is Nuclear transcription factor Y subunit gamma (nfyc-1) from Dictyostelium discoideum (Social amoeba).